The primary structure comprises 157 residues: uncharacterized protein (157 aa).

The signal sequence occupies residues 1 to 28 (MKRLFMKASLVLFAVVFVFAVKGAPAKA).

This is an uncharacterized protein from Bacillus subtilis (strain 168).